The following is a 218-amino-acid chain: Cytidylate kinase (218 aa).

Residue glycine 11 to threonine 19 coordinates ATP.

Belongs to the cytidylate kinase family. Type 1 subfamily.

It is found in the cytoplasm. The enzyme catalyses CMP + ATP = CDP + ADP. It carries out the reaction dCMP + ATP = dCDP + ADP. The protein is Cytidylate kinase of Neisseria meningitidis serogroup B (strain ATCC BAA-335 / MC58).